The sequence spans 467 residues: Argininosuccinate lyase (467 aa).

Belongs to the lyase 1 family. Argininosuccinate lyase subfamily.

The protein localises to the cytoplasm. It carries out the reaction 2-(N(omega)-L-arginino)succinate = fumarate + L-arginine. The protein operates within amino-acid biosynthesis; L-arginine biosynthesis; L-arginine from L-ornithine and carbamoyl phosphate: step 3/3. This chain is Argininosuccinate lyase, found in Rhizobium etli (strain ATCC 51251 / DSM 11541 / JCM 21823 / NBRC 15573 / CFN 42).